The primary structure comprises 26 residues: Histone H2B.1, sperm (26 aa).

Residues 1 to 26 are disordered; it reads MPSQKSPTKRSPTKRSPQKGGKGAKR. 3 short sequence motifs (SPKK motif) span residues 6–9, 11–14, and 16–19; these read SPTK and SPQK. Basic residues predominate over residues 7-26; the sequence is PTKRSPTKRSPQKGGKGAKR. Residues Ser-11 and Ser-16 each carry the phosphoserine modification.

The protein belongs to the histone H2B family. As to quaternary structure, the nucleosome is a histone octamer containing two molecules each of H2A, H2B, H3 and H4 assembled in one H3-H4 heterotetramer and two H2A-H2B heterodimers. The octamer wraps approximately 147 bp of DNA. In terms of processing, monoubiquitination gives a specific tag for epigenetic transcriptional activation and is also prerequisite for histone H3 'Lys-4' and 'Lys-79' methylation. Post-translationally, phosphorylated on SPKK motifs 2 and 3; which may regulate DNA binding. Dephosphorylated during maturation of spermatids to mature sperm and rephosphorylated at fertilization.

The protein resides in the nucleus. It is found in the chromosome. Its function is as follows. Core component of nucleosome. Nucleosomes wrap and compact DNA into chromatin, limiting DNA accessibility to the cellular machineries which require DNA as a template. Histones thereby play a central role in transcription regulation, DNA repair, DNA replication and chromosomal stability. DNA accessibility is regulated via a complex set of post-translational modifications of histones, also called histone code, and nucleosome remodeling. This chain is Histone H2B.1, sperm, found in Echinus esculentus (Sea urchin).